Consider the following 434-residue polypeptide: Septin-7 (434 aa).

Position 27 is a phosphotyrosine (Tyr-27). The 270-residue stretch at 44–313 (RGFEFTLMVV…ENYRSRKLAA (270 aa)) folds into the Septin-type G domain. Residues 44 to 314 (RGFEFTLMVV…NYRSRKLAAV (271 aa)) form an interaction with SEPTIN12 region. Positions 54-61 (GESGLGKS) are G1 motif. 54–61 (GESGLGKS) lines the GTP pocket. A Phosphoserine modification is found at Ser-74. Residues Thr-87, Gly-113, and 192–200 (KADTLTPEE) contribute to the GTP site. The G3 motif stretch occupies residues 110 to 113 (DTPG). The interval 191-194 (AKAD) is G4 motif. Phosphothreonine is present on Thr-225. Positions 247 and 262 each coordinate GTP. Positions 329 to 434 (TKSPLAQMEE…EKNKKKGKIF (106 aa)) form a coiled coil. Ser-331 is modified (phosphoserine). Lys-370 carries the N6-acetyllysine modification. Positions 377 to 407 (QRRHEQMKKNLEAQHKGLEEKRRQFEDEKAN) are enriched in basic and acidic residues. The tract at residues 377–434 (QRRHEQMKKNLEAQHKGLEEKRRQFEDEKANWEAQQRILEQQNSSRTLEKNKKKGKIF) is disordered. A Phosphoserine modification is found at Ser-421. Thr-423 bears the Phosphothreonine mark.

The protein belongs to the TRAFAC class TrmE-Era-EngA-EngB-Septin-like GTPase superfamily. Septin GTPase family. Septins polymerize into heterooligomeric protein complexes that form filaments, and associate with cellular membranes, actin filaments and microtubules. GTPase activity is required for filament formation. Filaments are assembled from asymmetrical heterotrimers, composed of SEPTIN2, SEPTIN6 and SEPTIN7 that associate head-to-head to form a hexameric unit. Within the trimer, directly interacts with SEPTIN6, while interaction with SEPTIN2 seems indirect. In the absence of SEPTIN6, forms homodimers. Interacts directly with CENPE and links CENPE to septin filaments composed of SEPTIN2, SEPTIN6 and SEPTIN7. Interacts with SEPTIN5, SEPTIN8, SEPTIN9 and SEPTIN11. Component of a septin core octameric complex consisting of SEPTIN12, SEPTIN7, SEPTIN6 and SEPTIN2 or SEPTIN4 in the order 12-7-6-2-2-6-7-12 or 12-7-6-4-4-6-7-12 and located in the sperm annulus; the SEPTIN12:SEPTIN7 association is mediated by the respective GTP-binding domains.

It localises to the cytoplasm. It is found in the chromosome. Its subcellular location is the centromere. The protein resides in the kinetochore. The protein localises to the cytoskeleton. It localises to the spindle. It is found in the cleavage furrow. Its subcellular location is the midbody. The protein resides in the cilium axoneme. The protein localises to the cell projection. It localises to the cilium. It is found in the flagellum. Its function is as follows. Filament-forming cytoskeletal GTPase. Required for normal organization of the actin cytoskeleton. Required for normal progress through mitosis. Involved in cytokinesis. Required for normal association of CENPE with the kinetochore. Plays a role in ciliogenesis and collective cell movements. Forms a filamentous structure with SEPTIN12, SEPTIN6, SEPTIN2 and probably SEPTIN4 at the sperm annulus which is required for the structural integrity and motility of the sperm tail during postmeiotic differentiation. This chain is Septin-7, found in Pan troglodytes (Chimpanzee).